We begin with the raw amino-acid sequence, 474 residues long: Probable fucosyltransferase 9 (474 aa).

The helical; Signal-anchor for type II membrane protein transmembrane segment at 1–21 (MIKLTIAIATCLVLCLVLLLP) threads the bilayer. Residues 22–474 (SSNISYRHKY…LKLVDVSDEL (453 aa)) are Lumenal-facing. 3 N-linked (GlcNAc...) asparagine glycosylation sites follow: N24, N39, and N208.

Belongs to the glycosyltransferase 37 family. Expressed in leaves and stems.

The protein localises to the golgi apparatus. It localises to the golgi stack membrane. It functions in the pathway protein modification; protein glycosylation. Functionally, may be involved in cell wall biosynthesis. May act as a fucosyltransferase. This Arabidopsis thaliana (Mouse-ear cress) protein is Probable fucosyltransferase 9 (FUT9).